The primary structure comprises 396 residues: GTPase Obg (396 aa).

Residues 1–159 (MKFVDEATIY…RNIRLELKVL (159 aa)) form the Obg domain. Residues 160 to 333 (ADVGLLGLPN…LCQDIMTWIE (174 aa)) enclose the OBG-type G domain. GTP-binding positions include 166–173 (GLPNAGKS), 191–195 (FTTLV), 213–216 (DIPG), 283–286 (NKTD), and 314–316 (SAL). Mg(2+)-binding residues include Ser-173 and Thr-193. Disordered stretches follow at residues 337–356 (EEER…REQM) and 373–396 (LARK…FYAP). Residues 347–356 (EADRLNREQM) show a composition bias toward basic and acidic residues. Residues 381–396 (SDDDDDDEDVEVFYAP) are compositionally biased toward acidic residues.

The protein belongs to the TRAFAC class OBG-HflX-like GTPase superfamily. OBG GTPase family. In terms of assembly, monomer. Requires Mg(2+) as cofactor.

The protein localises to the cytoplasm. Its function is as follows. An essential GTPase which binds GTP, GDP and possibly (p)ppGpp with moderate affinity, with high nucleotide exchange rates and a fairly low GTP hydrolysis rate. Plays a role in control of the cell cycle, stress response, ribosome biogenesis and in those bacteria that undergo differentiation, in morphogenesis control. The polypeptide is GTPase Obg (Hahella chejuensis (strain KCTC 2396)).